We begin with the raw amino-acid sequence, 361 residues long: Phosphoserine aminotransferase (361 aa).

L-glutamate is bound at residue R42. Pyridoxal 5'-phosphate contacts are provided by residues 76 to 77 (AR), W102, T153, D173, and Q196. K197 is subject to N6-(pyridoxal phosphate)lysine. A pyridoxal 5'-phosphate-binding site is contributed by 238 to 239 (NT).

The protein belongs to the class-V pyridoxal-phosphate-dependent aminotransferase family. SerC subfamily. Homodimer. The cofactor is pyridoxal 5'-phosphate.

It is found in the cytoplasm. The catalysed reaction is O-phospho-L-serine + 2-oxoglutarate = 3-phosphooxypyruvate + L-glutamate. It carries out the reaction 4-(phosphooxy)-L-threonine + 2-oxoglutarate = (R)-3-hydroxy-2-oxo-4-phosphooxybutanoate + L-glutamate. Its pathway is amino-acid biosynthesis; L-serine biosynthesis; L-serine from 3-phospho-D-glycerate: step 2/3. The protein operates within cofactor biosynthesis; pyridoxine 5'-phosphate biosynthesis; pyridoxine 5'-phosphate from D-erythrose 4-phosphate: step 3/5. Catalyzes the reversible conversion of 3-phosphohydroxypyruvate to phosphoserine and of 3-hydroxy-2-oxo-4-phosphonooxybutanoate to phosphohydroxythreonine. The polypeptide is Phosphoserine aminotransferase (Pectobacterium carotovorum subsp. carotovorum (strain PC1)).